A 466-amino-acid polypeptide reads, in one-letter code: Soluble pyridine nucleotide transhydrogenase (466 aa).

FAD is bound at residue Glu-36 to Cys-45.

The protein belongs to the class-I pyridine nucleotide-disulfide oxidoreductase family. Requires FAD as cofactor.

Its subcellular location is the cytoplasm. It carries out the reaction NAD(+) + NADPH = NADH + NADP(+). Its function is as follows. Conversion of NADPH, generated by peripheral catabolic pathways, to NADH, which can enter the respiratory chain for energy generation. This Vibrio atlanticus (strain LGP32) (Vibrio splendidus (strain Mel32)) protein is Soluble pyridine nucleotide transhydrogenase.